The following is a 205-amino-acid chain: Probable thymidylate kinase (205 aa).

7–14 (GIDGAGKS) is a binding site for ATP.

This sequence belongs to the thymidylate kinase family.

The catalysed reaction is dTMP + ATP = dTDP + ADP. In Thermococcus kodakarensis (strain ATCC BAA-918 / JCM 12380 / KOD1) (Pyrococcus kodakaraensis (strain KOD1)), this protein is Probable thymidylate kinase.